The sequence spans 438 residues: Porin AaxA (438 aa).

An N-terminal signal peptide occupies residues 1 to 21 (MISFRFLLLSGLCALGISSYA).

This sequence belongs to the OprB family.

It is found in the cell outer membrane. Its function is as follows. Facilitates L-arginine uptake, as part of the AaxABC system. The arginine uptake by the bacterium in the macrophage may be a virulence factor against the host innate immune response. This is Porin AaxA (aaxA) from Chlamydia pneumoniae (Chlamydophila pneumoniae).